We begin with the raw amino-acid sequence, 235 residues long: Phosphoribosylaminoimidazole-succinocarboxamide synthase (235 aa).

Belongs to the SAICAR synthetase family.

The enzyme catalyses 5-amino-1-(5-phospho-D-ribosyl)imidazole-4-carboxylate + L-aspartate + ATP = (2S)-2-[5-amino-1-(5-phospho-beta-D-ribosyl)imidazole-4-carboxamido]succinate + ADP + phosphate + 2 H(+). It functions in the pathway purine metabolism; IMP biosynthesis via de novo pathway; 5-amino-1-(5-phospho-D-ribosyl)imidazole-4-carboxamide from 5-amino-1-(5-phospho-D-ribosyl)imidazole-4-carboxylate: step 1/2. This chain is Phosphoribosylaminoimidazole-succinocarboxamide synthase, found in Clostridium botulinum (strain Eklund 17B / Type B).